Consider the following 277-residue polypeptide: (-)-trans-carveol dehydrogenase (277 aa).

Residue 10–32 participates in NAD(+) binding; sequence LITGAARGQGRSHAIKLAEEGAD. Ser-156 contributes to the substrate binding site. Catalysis depends on Tyr-169, which acts as the Proton acceptor.

It belongs to the short-chain dehydrogenases/reductases (SDR) family. Homotetramer.

The enzyme catalyses (1S,5R)-carveol + NAD(+) = (R)-carvone + NADH + H(+). The catalysed reaction is (1S,5S)-carveol + NAD(+) = (S)-carvone + NADH + H(+). The protein operates within terpene metabolism; limonene degradation. With respect to regulation, competitively inhibited by the product (S)- or (R)-carvone. Catalyzes the oxidation of carveol to carvone, with a strong stereoselectivity since it efficiently converts only the (6S)-stereoisomers, of which (-)-(4R,6S)-trans-carveol is the better substrate. Displays a broad substrate specificity with a preference for substituted cyclohexanols, and does not catalyze the oxidation of primary or short chain aliphatic secondary alcohols. Is also able, albeit more slowly, to oxidize limonene-1,2-diol into 1-hydroxy-2-oxolimonene. The polypeptide is (-)-trans-carveol dehydrogenase (limC) (Rhodococcus erythropolis (Arthrobacter picolinophilus)).